Consider the following 477-residue polypeptide: Argininosuccinate lyase (477 aa).

It belongs to the lyase 1 family. Argininosuccinate lyase subfamily.

It is found in the cytoplasm. It carries out the reaction 2-(N(omega)-L-arginino)succinate = fumarate + L-arginine. Its pathway is amino-acid biosynthesis; L-arginine biosynthesis; L-arginine from L-ornithine and carbamoyl phosphate: step 3/3. The sequence is that of Argininosuccinate lyase from Acinetobacter baumannii (strain ACICU).